Consider the following 21-residue polypeptide: Large ribosomal subunit protein uL10 (21 aa).

This sequence belongs to the universal ribosomal protein uL10 family. As to quaternary structure, part of the ribosomal stalk of the 50S ribosomal subunit. The N-terminus interacts with L11 and the large rRNA to form the base of the stalk. The C-terminus forms an elongated spine to which L12 dimers bind in a sequential fashion forming a multimeric L10(L12)X complex.

Its function is as follows. Forms part of the ribosomal stalk, playing a central role in the interaction of the ribosome with GTP-bound translation factors. The protein is Large ribosomal subunit protein uL10 (rplJ) of Bacillus cereus.